A 31-amino-acid polypeptide reads, in one-letter code: U2-theraphotoxin-Hhn1a (31 aa).

3 disulfide bridges follow: Cys-2–Cys-14, Cys-7–Cys-19, and Cys-13–Cys-26.

In terms of tissue distribution, expressed by the venom gland.

The protein localises to the secreted. Functionally, agglutinates erythrocytes. The polypeptide is U2-theraphotoxin-Hhn1a (Cyriopagopus hainanus (Chinese bird spider)).